A 68-amino-acid chain; its full sequence is Putative membrane protein insertion efficiency factor (68 aa).

This sequence belongs to the UPF0161 family.

It is found in the cell membrane. Could be involved in insertion of integral membrane proteins into the membrane. The protein is Putative membrane protein insertion efficiency factor of Syntrophomonas wolfei subsp. wolfei (strain DSM 2245B / Goettingen).